A 124-amino-acid chain; its full sequence is uncharacterized protein (124 aa).

Disordered regions lie at residues 1–26 (MRRQEALVVTAGTASEASRDGEQPRP) and 100–124 (IPGQQSRNCSLPQTKYYSRHGGLRR). Positions 102 to 115 (GQQSRNCSLPQTKY) are enriched in polar residues.

It localises to the cytoplasm. The protein resides in the cytoskeleton. The protein localises to the cilium basal body. This is an uncharacterized protein from Rattus norvegicus (Rat).